Reading from the N-terminus, the 92-residue chain is YcgL domain-containing protein Sputcn32_1766 (92 aa).

In terms of domain architecture, YcgL spans 1–85; that stretch reads MLCTVYKSTR…PQVNLLAEHK (85 aa).

The chain is YcgL domain-containing protein Sputcn32_1766 from Shewanella putrefaciens (strain CN-32 / ATCC BAA-453).